The chain runs to 186 residues: Adenine phosphoribosyltransferase (186 aa).

It belongs to the purine/pyrimidine phosphoribosyltransferase family. As to quaternary structure, homodimer.

The protein resides in the cytoplasm. It catalyses the reaction AMP + diphosphate = 5-phospho-alpha-D-ribose 1-diphosphate + adenine. Its pathway is purine metabolism; AMP biosynthesis via salvage pathway; AMP from adenine: step 1/1. Its function is as follows. Catalyzes a salvage reaction resulting in the formation of AMP, that is energically less costly than de novo synthesis. The chain is Adenine phosphoribosyltransferase from Xanthomonas euvesicatoria pv. vesicatoria (strain 85-10) (Xanthomonas campestris pv. vesicatoria).